Here is a 907-residue protein sequence, read N- to C-terminus: Probable dipeptidyl-aminopeptidase B (907 aa).

Basic and acidic residues predominate over residues 1–26 (MPRQRAPKEEEAELLTKQERSTRSSE). Positions 1 to 70 (MPRQRAPKEE…EKYTDEDDEA (70 aa)) are disordered. Residues 1-93 (MPRQRAPKEE…PVAVDKKTRR (93 aa)) are Cytoplasmic-facing. Residues 30-44 (DASVSSISTTSLVLE) are compositionally biased toward low complexity. A helical; Signal-anchor for type II membrane protein membrane pass occupies residues 94–114 (WLWIVGIACVTGWALALVFFL). At 115 to 907 (MSGSYKHVST…SQVDARLERR (793 aa)) the chain is on the vacuolar side. The N-linked (GlcNAc...) asparagine glycan is linked to Asn-560. The Charge relay system role is filled by Ser-751. N-linked (GlcNAc...) asparagine glycosylation is present at Asn-805. Catalysis depends on charge relay system residues Asp-828 and His-861.

This sequence belongs to the peptidase S9B family.

The protein resides in the vacuole membrane. The enzyme catalyses Release of an N-terminal dipeptide, Xaa-Yaa-|-Zaa-, from a polypeptide, preferentially when Yaa is Pro, provided Zaa is neither Pro nor hydroxyproline.. Type IV dipeptidyl-peptidase which removes N-terminal dipeptides sequentially from polypeptides having unsubstituted N-termini provided that the penultimate residue is proline. In Pyrenophora teres f. teres (strain 0-1) (Barley net blotch fungus), this protein is Probable dipeptidyl-aminopeptidase B (dapB).